Consider the following 193-residue polypeptide: Achaete-scute homolog 2 (193 aa).

Disordered stretches follow at residues 1-27 (MDGG…RRPA), 37-56 (RRRP…ARRN), and 118-177 (GGLR…GALS). The bHLH domain occupies 50-102 (AAVARRNERERNRVKLVNLGFQALRQHVPHGGASKKLSKVETLRSAVEYIRAL). Over residues 140–150 (AASPSRASSSP) the composition is skewed to low complexity.

Efficient DNA binding requires dimerization with another basic helix-loop-helix (bHLH) protein. Forms heterodimers with bHLH transcription factor TCF3. May not heterodimerise with bHLH protein HAND1. As to expression, expressed in the placenta at a stage between the first and second trimesters and when it matures, at about 32-36 weeks. Expressed in the extravillous trophoblasts, the intermediate trophoblasts, and at lower levels in the cytotrophoblasts and stroma of chorionic villi of the developing placenta. Expressed in follicular T-helper (Tfh) cells.

Its subcellular location is the nucleus. In terms of biological role, transcription factor. Binds to E-box motifs 5'-CANNTG-3' in the regulatory elements of target genes, probably as a heterodimer with another basic helix-loop-helix (bHLH) protein such as the transcription factor TCF3. May bind both open and closed chromatin, acting as a pioneer transcription factor to allow other factors to bind and activate lineage-specific genes. Required during post-implantation development for the generation of some differentiated trophoblast cell types. Transcriptional activity of ASCL2 may be antagonised in a subset of trophoblast cells by bHLH transcription factor HAND1, perhaps by competing for dimerization with other bHLH proteins. Involved in differentiation and function of follicular T-helper (Tfh) cells, thereby playing a role in germinal center responses; probably modulates expression of genes involved in Tfh cell function, such as BCL6. May also act as a suppressor of Th1-, Th2- and Th17-cell differentiation. Induces the formation of stem cells in intestinal crypts in vitro, synergistically activating transcription of target genes, such as SOX9, together with TCF4/beta-catenin. May form a bistable transcriptional switch, controlling expression of its own gene together with Wnt/R-spondin signaling, and thereby maintaining stem cell characteristics. Modulates expression of target genes, including perhaps down-regulating EGR1/Krox24 and chemokine CXCL10/Mob-1 and up-regulating CXCR4 and CDKN1C/p57kip2, in Schwann cells. May play a role in reducing proliferation of Schwann cells, perhaps acting via modulation of expression of CDKN1C. May be dispensable for blastocyst formation and later embryonic function. May be involved in the determination of neuronal precursors. The chain is Achaete-scute homolog 2 (ASCL2) from Homo sapiens (Human).